We begin with the raw amino-acid sequence, 510 residues long: ATP synthase subunit alpha (510 aa).

169-176 lines the ATP pocket; sequence GDRQTGKT.

This sequence belongs to the ATPase alpha/beta chains family. As to quaternary structure, F-type ATPases have 2 components, CF(1) - the catalytic core - and CF(0) - the membrane proton channel. CF(1) has five subunits: alpha(3), beta(3), gamma(1), delta(1), epsilon(1). CF(0) has three main subunits: a(1), b(2) and c(9-12). The alpha and beta chains form an alternating ring which encloses part of the gamma chain. CF(1) is attached to CF(0) by a central stalk formed by the gamma and epsilon chains, while a peripheral stalk is formed by the delta and b chains.

The protein resides in the cell inner membrane. It catalyses the reaction ATP + H2O + 4 H(+)(in) = ADP + phosphate + 5 H(+)(out). Its function is as follows. Produces ATP from ADP in the presence of a proton gradient across the membrane. The alpha chain is a regulatory subunit. This Rickettsia rickettsii (strain Iowa) protein is ATP synthase subunit alpha.